The chain runs to 441 residues: Xaa-Pro dipeptidase (441 aa).

Asp244, Asp255, His336, Glu381, and Glu420 together coordinate Mn(2+).

Belongs to the peptidase M24B family. Bacterial-type prolidase subfamily. Mn(2+) is required as a cofactor.

The enzyme catalyses Xaa-L-Pro dipeptide + H2O = an L-alpha-amino acid + L-proline. Functionally, splits dipeptides with a prolyl residue in the C-terminal position. The polypeptide is Xaa-Pro dipeptidase (Xanthomonas campestris pv. campestris (strain B100)).